The sequence spans 87 residues: Small ribosomal subunit protein bS16 (87 aa).

This sequence belongs to the bacterial ribosomal protein bS16 family.

This chain is Small ribosomal subunit protein bS16, found in Ehrlichia ruminantium (strain Gardel).